Here is a 226-residue protein sequence, read N- to C-terminus: Triosephosphate isomerase (226 aa).

13-15 (NFK) provides a ligand contact to substrate. The Electrophile role is filled by histidine 97. The Proton acceptor role is filled by glutamate 145. Residues isoleucine 150, glycine 185, and 206-207 (AS) contribute to the substrate site.

It belongs to the triosephosphate isomerase family. As to quaternary structure, homotetramer; dimer of dimers.

Its subcellular location is the cytoplasm. The enzyme catalyses D-glyceraldehyde 3-phosphate = dihydroxyacetone phosphate. Its pathway is carbohydrate biosynthesis; gluconeogenesis. It functions in the pathway carbohydrate degradation; glycolysis; D-glyceraldehyde 3-phosphate from glycerone phosphate: step 1/1. In terms of biological role, involved in the gluconeogenesis. Catalyzes stereospecifically the conversion of dihydroxyacetone phosphate (DHAP) to D-glyceraldehyde-3-phosphate (G3P). The polypeptide is Triosephosphate isomerase (Methanobacterium bryantii).